Consider the following 102-residue polypeptide: Lipopolysaccharide assembly protein A (102 aa).

The Cytoplasmic portion of the chain corresponds to 1–2; that stretch reads MK. The helical transmembrane segment at 3–23 threads the bilayer; it reads YLLIFLLVLAIFVISVTLGAQ. Residues 24–43 are Periplasmic-facing; sequence NDQQVTFNYLLAQGEYRIST. The helical transmembrane segment at 44–64 threads the bilayer; sequence LLAVLFAAGFAIGWLICGLFW. Residues 64 to 92 adopt a coiled-coil conformation; the sequence is WLRVRVSLARAERKIKRLENQLSPATDVA. The Cytoplasmic segment spans residues 65 to 102; sequence LRVRVSLARAERKIKRLENQLSPATDVAVVPHSSAAKE.

Belongs to the LapA family.

It localises to the cell inner membrane. Functionally, involved in the assembly of lipopolysaccharide (LPS). This Escherichia coli (strain K12) protein is Lipopolysaccharide assembly protein A.